The chain runs to 404 residues: Pyrophosphate--fructose 6-phosphate 1-phosphotransferase (404 aa).

G13 contributes to the diphosphate binding site. N108 contacts Mg(2+). Substrate-binding positions include 136–138 (TID), 180–182 (MGR), E237, and 295–298 (YLQR). D138 serves as the catalytic Proton acceptor.

This sequence belongs to the phosphofructokinase type A (PFKA) family. PPi-dependent PFK group II subfamily. Clade 'B2' sub-subfamily. Homodimer. Requires Mg(2+) as cofactor.

The protein resides in the cytoplasm. The catalysed reaction is beta-D-fructose 6-phosphate + diphosphate = beta-D-fructose 1,6-bisphosphate + phosphate + H(+). Its pathway is carbohydrate degradation; glycolysis; D-glyceraldehyde 3-phosphate and glycerone phosphate from D-glucose: step 3/4. Non-allosteric. Its function is as follows. Catalyzes the phosphorylation of D-fructose 6-phosphate, the first committing step of glycolysis. Uses inorganic phosphate (PPi) as phosphoryl donor instead of ATP like common ATP-dependent phosphofructokinases (ATP-PFKs), which renders the reaction reversible, and can thus function both in glycolysis and gluconeogenesis. Consistently, PPi-PFK can replace the enzymes of both the forward (ATP-PFK) and reverse (fructose-bisphosphatase (FBPase)) reactions. The protein is Pyrophosphate--fructose 6-phosphate 1-phosphotransferase of Rhodospirillum rubrum (strain ATCC 11170 / ATH 1.1.1 / DSM 467 / LMG 4362 / NCIMB 8255 / S1).